Reading from the N-terminus, the 220-residue chain is GTP-binding nuclear protein GSP2/CNR2 (220 aa).

Ser-2 bears the N-acetylserine mark. The residue at position 2 (Ser-2) is a Phosphoserine. Residues 10–174 (EVPTFKLVLV…LWLARKLAGN (165 aa)) form the Small GTPase Ran-type domain. 21–28 (DGGTGKTT) contacts GTP. Residues 40 to 48 (KKYIATIGV) are switch-I. Residues Gly-71, 125 to 128 (NKVD), and 153 to 155 (SAK) each bind GTP. The switch-II stretch occupies residues 71–87 (GQEKFGGLRDGYYINAQ).

Belongs to the small GTPase superfamily. Ran family. Found in a nuclear export complex with RanGTP, exportin and pre-miRNA.

The protein localises to the nucleus. In terms of biological role, GTP-binding protein involved in nucleocytoplasmic transport. Required for the import of protein into the nucleus and also for RNA export. Not essential for cell viability. This Saccharomyces cerevisiae (strain ATCC 204508 / S288c) (Baker's yeast) protein is GTP-binding nuclear protein GSP2/CNR2 (GSP2).